We begin with the raw amino-acid sequence, 227 residues long: 2,3-bisphosphoglycerate-dependent phosphoglycerate mutase (227 aa).

Substrate-binding positions include 7–14 (RHGLSEWN), 20–21 (TG), R59, 86–89 (ERHY), K97, 113–114 (RR), and 182–183 (GN). H8 (tele-phosphohistidine intermediate) is an active-site residue. Catalysis depends on E86, which acts as the Proton donor/acceptor.

Belongs to the phosphoglycerate mutase family. BPG-dependent PGAM subfamily. Homodimer.

It catalyses the reaction (2R)-2-phosphoglycerate = (2R)-3-phosphoglycerate. The protein operates within carbohydrate degradation; glycolysis; pyruvate from D-glyceraldehyde 3-phosphate: step 3/5. Functionally, catalyzes the interconversion of 2-phosphoglycerate and 3-phosphoglycerate. This is 2,3-bisphosphoglycerate-dependent phosphoglycerate mutase from Actinobacillus succinogenes (strain ATCC 55618 / DSM 22257 / CCUG 43843 / 130Z).